Reading from the N-terminus, the 245-residue chain is DNA polymerase zeta processivity subunit (245 aa).

In terms of domain architecture, HORMA spans 3–203; sequence RWVEKWLRVY…PPKIKLTSLV (201 aa).

Belongs to the MAD2 family. Forms DNA polymerase zeta with REV3. Interacts with REV1.

The protein localises to the mitochondrion. Functionally, required for DNA damage induced mutagenesis. Involved in DNA repair, mitochondrial DNA repair and translesion synthesis. Has a role in the bypass of abasic (AP) sites. The chain is DNA polymerase zeta processivity subunit (REV7) from Saccharomyces cerevisiae (strain ATCC 204508 / S288c) (Baker's yeast).